A 58-amino-acid chain; its full sequence is DNA-directed RNA polymerases I, II, and III subunit RPABC4 (58 aa).

4 residues coordinate Zn(2+): cysteine 19, cysteine 22, cysteine 36, and cysteine 39. The segment at 19–39 (CGECHTENEIKSRDPIRCREC) adopts a C4-type zinc-finger fold.

It belongs to the archaeal Rpo12/eukaryotic RPC10 RNA polymerase subunit family. In terms of assembly, component of the RNA polymerase I (Pol I), RNA polymerase II (Pol II) and RNA polymerase III (Pol III) complexes consisting of at least 13, 12 and 17 subunits, respectively. Pol I complex consists of a ten-subunit catalytic core composed of POLR1A/RPA1, POLR1B/RPA2, POLR1C/RPAC1, POLR1D/RPAC2, POLR1H/RPA12, POLR2E/RPABC1, POLR2F/RPABC2, POLR2H/RPABC3, POLR2K/RPABC4 and POLR2L/RPABC5; a mobile stalk subunit POLR1F/RPA43 protruding from the core and additional subunits homologous to general transcription factors POLR1E/RPA49 and POLR1G/RPA34. Part of Pol I pre-initiation complex (PIC), in which Pol I core assembles with RRN3 and promoter-bound UTBF and SL1/TIF-IB complex. Pol II complex contains a ten-subunit catalytic core composed of POLR2A/RPB1, POLR2B/RPB2, POLR2C/RPB3, POLR2I/RPB9, POLR2J/RPB11, POLR2E/RPABC1, POLR2F/RPABC2, POLR2H/RPABC3, POLR2K/RPABC4 and POLR2L/RPABC5 and a mobile stalk composed of two subunits POLR2D/RPB4 and POLR2G/RPB7. Part of Pol II(G) complex, in which Pol II core associates with an additional subunit POLR2M; unlike conventional Pol II, Pol II(G) functions as a transcriptional repressor. Part of TBP-based Pol II pre-initiation complex (PIC), in which Pol II core assembles with general transcription factors and other specific initiation factors including GTF2E1, GTF2E2, GTF2F1, GTF2F2, TCEA1, ERCC2, ERCC3, GTF2H2, GTF2H3, GTF2H4, GTF2H5, GTF2A1, GTF2A2, GTF2B and TBP; this large multi-subunit PIC complex mediates DNA unwinding and targets Pol II core to the transcription start site where the first phosphodiester bond forms. Pol III complex consists of a ten-subunit catalytic core composed of POLR3A/RPC1, POLR3B/RPC2, POLR1C/RPAC1, POLR1D/RPAC2, POLR3K/RPC10, POLR2E/RPABC1, POLR2F/RPABC2, POLR2H/RPABC3, POLR2K/RPABC4 and POLR2L/RPABC5; a mobile stalk composed of two subunits POLR3H/RPC8 and CRCP/RPC9, protruding from the core and functioning primarily in transcription initiation; and additional subunits homologous to general transcription factors of the RNA polymerase II machinery, POLR3C/RPC3-POLR3F/RPC6-POLR3G/RPC7 heterotrimer required for transcription initiation and POLR3D/RPC4-POLR3E/RPC5 heterodimer involved in both transcription initiation and termination.

The protein resides in the nucleus. It localises to the nucleolus. DNA-dependent RNA polymerase catalyzes the transcription of DNA into RNA using the four ribonucleoside triphosphates as substrates. Common component of RNA polymerases I, II and III which synthesize ribosomal RNA precursors, mRNA precursors and many functional non-coding RNAs, and a small RNAs, such as 5S rRNA and tRNAs, respectively. In Mus musculus (Mouse), this protein is DNA-directed RNA polymerases I, II, and III subunit RPABC4 (Polr2k).